A 193-amino-acid chain; its full sequence is uncharacterized protein (193 aa).

This is an uncharacterized protein from Mycoplasma pneumoniae (strain ATCC 29342 / M129 / Subtype 1) (Mycoplasmoides pneumoniae).